Reading from the N-terminus, the 2005-residue chain is Sodium channel protein type 2 subunit alpha (2005 aa).

Over 1-129 the chain is Cytoplasmic; that stretch reads MARSVLVPPG…KLAIKILVHS (129 aa). A Phosphoserine modification is found at Ser-4. The disordered stretch occupies residues 28–61; it reads RIAEEKAKRPKQERKDEDDENGPKPNSDLEAGKS. Lys-38 participates in a covalent cross-link: Glycyl lysine isopeptide (Lys-Gly) (interchain with G-Cter in SUMO1). The stretch at 111–456 is one I repeat; sequence ILTPFNPIRK…QQMLEQLKKQ (346 aa). Residues 130–148 form a helical membrane-spanning segment; sequence LFNVLIMCTILTNCVFMTM. Residues 149-155 lie on the Extracellular side of the membrane; that stretch reads SNPPDWT. Residues 156–176 form a helical membrane-spanning segment; sequence KNVEYTFTGIYTFESLIKILA. Residues 177-190 are Cytoplasmic-facing; sequence RGFCLEDFTFLRNP. A helical transmembrane segment spans residues 191-208; sequence WNWLDFTVITFAYVTEFV. At 209-214 the chain is on the extracellular side; that stretch reads NLGNVS. Asn-212 is a glycosylation site (N-linked (GlcNAc...) asparagine). A helical membrane pass occupies residues 215–231; that stretch reads ALRTFRVLRALKTISVI. The Cytoplasmic portion of the chain corresponds to 232-250; that stretch reads PGLKTIVGALIQSVKKLSD. Residues 251-270 form a helical membrane-spanning segment; it reads VMILTVFCLSVFALIGLQLF. The Extracellular segment spans residues 271-369; it reads MGNLRNKCLQ…PNYGYTSFDT (99 aa). A disulfide bridge connects residues Cys-278 and Cys-338. Residues Asn-285, Asn-291, Asn-297, Asn-303, Asn-308, and Asn-340 are each glycosylated (N-linked (GlcNAc...) asparagine). The pore-forming intramembrane region spans 370–394; it reads FSWAFLSLFRLMTQDFWENLYQLTL. At 395–401 the chain is on the extracellular side; that stretch reads RAAGKTY. A helical transmembrane segment spans residues 402–422; that stretch reads MIFFVLVIFLGSFYLINLILA. Over 423–759 the chain is Cytoplasmic; that stretch reads VVAMAYEEQN…HVVNLVVMDP (337 aa). Ser-468, Ser-471, Ser-484, Ser-526, Ser-528, Ser-531, Ser-553, Ser-554, and Ser-558 each carry phosphoserine. The interval 494–529 is disordered; the sequence is SSKSEKELKNRRKKKKQKEQAGEEEKEDAVRKSASE. Basic and acidic residues predominate over residues 511–529; the sequence is KEQAGEEEKEDAVRKSASE. Residue Ser-554 is modified to Phosphoserine; by PKC; in vitro. A phosphoserine; by PKC; in vitro mark is found at Ser-573 and Ser-576. 6 positions are modified to phosphoserine: Ser-589, Ser-610, Ser-623, Ser-687, Ser-688, and Ser-721. The disordered stretch occupies residues 591-634; sequence NDFADDEHSTFEDNDSRRDSLFVPHRHGERRPSNVSQASRASRG. Basic and acidic residues predominate over residues 596-610; the sequence is DEHSTFEDNDSRRDS. One copy of the II repeat lies at 741 to 1013; that stretch reads CCKPWLKVKH…QIAVGRMQKG (273 aa). The helical transmembrane segment at 760 to 778 threads the bilayer; it reads FVDLAITICIVLNTLFMAM. The Extracellular segment spans residues 779-789; the sequence is EHYPMTEQFSS. The chain crosses the membrane as a helical span at residues 790–809; that stretch reads VLSVGNLVFTGIFTAEMFLK. At 810–823 the chain is on the cytoplasmic side; sequence IIAMDPYYYFQEGW. Residues 824 to 843 form a helical membrane-spanning segment; sequence NIFDGFIVSLSLMELGLANV. Topologically, residues 844–845 are extracellular; that stretch reads EG. Residues 846 to 863 traverse the membrane as a helical segment; the sequence is LSVLRSFRLLRVFKLAKS. The Cytoplasmic portion of the chain corresponds to 864 to 879; the sequence is WPTLNMLIKIIGNSVG. A helical membrane pass occupies residues 880–898; the sequence is ALGNLTLVLAIIVFIFAVV. Residues 899–927 lie on the Extracellular side of the membrane; sequence GMQLFGKSYKECVCKISNDCELPRWHMHH. A disulfide bond links Cys-912 and Cys-918. Residues 917 to 918 are binds SCN2B; it reads DC. An intramembrane region (pore-forming) is located at residues 928–948; that stretch reads FFHSFLIVFRVLCGEWIETMW. Residues 949–961 are Extracellular-facing; it reads DCMEVAGQTMCLT. A disulfide bond links Cys-950 and Cys-959. Residues 962–982 form a helical membrane-spanning segment; that stretch reads VFMMVMVIGNLVVLNLFLALL. Residues 983–1209 lie on the Cytoplasmic side of the membrane; the sequence is LSSFSSDNLA…TCYKIVEHNW (227 aa). The tract at residues 1120-1166 is disordered; the sequence is EEFSSESDMEESKEKLNATSSSEGSTVDIGAPAEGEQPEAEPEESLE. Residues 1155 to 1166 are compositionally biased toward acidic residues; it reads EQPEAEPEESLE. The stretch at 1190-1504 is one III repeat; it reads KGKLWWNLRK…KKYYNAMKKL (315 aa). Residues 1210–1227 traverse the membrane as a helical segment; that stretch reads FETFIVFMILLSSGALAF. At 1228 to 1240 the chain is on the extracellular side; that stretch reads EDIYIEQRKTIKT. A helical transmembrane segment spans residues 1241 to 1259; that stretch reads MLEYADKVFTYIFILEMLL. Topologically, residues 1260 to 1273 are cytoplasmic; sequence KWVAYGFQMYFTNA. The chain crosses the membrane as a helical span at residues 1274 to 1292; it reads WCWLDFLIVDVSLVSLTAN. At 1293–1300 the chain is on the extracellular side; it reads ALGYSELG. Residues 1301 to 1319 traverse the membrane as a helical segment; sequence AIKSLRTLRALRPLRALSR. The Cytoplasmic portion of the chain corresponds to 1320–1336; it reads FEGMRVVVNALLGAIPS. Residues 1337 to 1356 traverse the membrane as a helical segment; sequence IMNVLLVCLIFWLIFSIMGV. Residues 1357–1408 are Extracellular-facing; it reads NLFAGKFYHCINYTTGEMFDVSVVNNYSECQALIESNQTARWKNVKVNFDNV. Cys-1366 and Cys-1386 are disulfide-bonded. Residues Asn-1368, Asn-1382, and Asn-1393 are each glycosylated (N-linked (GlcNAc...) asparagine). The segment at residues 1409 to 1430 is an intramembrane region (pore-forming); it reads GLGYLSLLQVATFKGWMDIMYA. The Extracellular segment spans residues 1431 to 1447; that stretch reads AVDSRNVELQPKYEDNL. A helical transmembrane segment spans residues 1448 to 1469; that stretch reads YMYLYFVIFIIFGSFFTLNLFI. The Cytoplasmic portion of the chain corresponds to 1470–1532; sequence GVIIDNFNQQ…MVFDFVTKQV (63 aa). Ser-1506 is modified (phosphoserine; by PKC). The stretch at 1513 to 1811 is one IV repeat; it reads IPRPANKFQG…WEKFDPDATQ (299 aa). A helical transmembrane segment spans residues 1533 to 1550; the sequence is FDISIMILICLNMVTMMV. Topologically, residues 1551 to 1561 are extracellular; sequence ETDDQSQEMTN. Residues 1562-1580 form a helical membrane-spanning segment; it reads ILYWINLVFIVLFTGECVL. At 1581–1592 the chain is on the cytoplasmic side; it reads KLISLRHYYFTI. A helical membrane pass occupies residues 1593–1610; the sequence is GWNIFDFVVVILSIVGMF. The Extracellular portion of the chain corresponds to 1611-1623; that stretch reads LAELIEKYFVSPT. A helical transmembrane segment spans residues 1624–1640; it reads LFRVIRLARIGRILRLI. The Cytoplasmic segment spans residues 1641-1659; sequence KGAKGIRTLLFALMMSLPA. Residues 1660–1677 traverse the membrane as a helical segment; the sequence is LFNIGLLLFLVMFIYAIF. At 1678 to 1699 the chain is on the extracellular side; sequence GMSNFAYVKREVGIDDMFNFET. Residues 1700-1722 constitute an intramembrane region (pore-forming); it reads FGNSMICLFQITTSAGWDGLLAP. Residues 1723 to 1752 lie on the Extracellular side of the membrane; the sequence is ILNSGPPDCDPEKDHPGSSVKGDCGNPSVG. Cys-1731 and Cys-1746 form a disulfide bridge. Residues 1753 to 1775 traverse the membrane as a helical segment; that stretch reads IFFFVSYIIISFLVVVNMYIAVI. The Cytoplasmic portion of the chain corresponds to 1776 to 2005; it reads LENFSVATEE…KGKDIRESKK (230 aa). Residues 1905 to 1934 form the IQ domain; it reads EEVSAIVIQRAYRRYLLKQKVKKVSSIYKK. Ser-1930 carries the post-translational modification Phosphoserine. Residues 1933–1964 are compositionally biased toward basic and acidic residues; that stretch reads KKDKGKEDEGTPIKEDIITDKLNENSTPEKTD. Positions 1933-2005 are disordered; sequence KKDKGKEDEG…KGKDIRESKK (73 aa). Residues Thr-1943, Thr-1963, and Thr-1966 each carry the phosphothreonine modification. Phosphoserine is present on Ser-1971. Over residues 1979–2005 the composition is skewed to basic and acidic residues; the sequence is TKPEKEKFEKDKSEKEDKGKDIRESKK.

The protein belongs to the sodium channel (TC 1.A.1.10) family. Nav1.2/SCN2A subfamily. As to quaternary structure, heterooligomer of a large alpha subunit and a smaller beta subunit. Heterooligomer with SCN2B or SCN4B; disulfide-linked. Heterooligomer with SCN1B or SCN3B; non-covalently linked. Interacts with NEDD4L. Interacts with CALM. Interacts with TMEM233. Interacts with the conotoxin GVIIJ. Interacts with the scorpion toxin BMK M1. May be ubiquitinated by NEDD4L; which would promote its endocytosis. In terms of processing, phosphorylation at Ser-1506 by PKC in a highly conserved cytoplasmic loop slows inactivation of the sodium channel and reduces peak sodium currents. Post-translationally, sumoylated at Lys-38. Sumoylation is induced by hypoxia, increases voltage-gated sodium current and mediates the early response to acute hypoxia in neurons. Sumoylated SCN2A is located at the cell membrane. As to expression, expressed in brain (at protein level). Expressed in cerebellar granule neurons (at protein level).

The protein localises to the cell membrane. The catalysed reaction is Na(+)(in) = Na(+)(out). Functionally, mediates the voltage-dependent sodium ion permeability of excitable membranes. Assuming opened or closed conformations in response to the voltage difference across the membrane, the protein forms a sodium-selective channel through which Na(+) ions may pass in accordance with their electrochemical gradient. Implicated in the regulation of hippocampal replay occurring within sharp wave ripples (SPW-R) important for memory. The chain is Sodium channel protein type 2 subunit alpha from Rattus norvegicus (Rat).